Here is a 150-residue protein sequence, read N- to C-terminus: MRKIVAGKLHGIHVTEANLDYHGSITLDPDHCEEAGILPMEFVEIWNKNSGARISTYVILGERGSRCCILNGAAARTCQPGDQIIVCNSIYLDEAHITSLKPRIVTFDQDNNILDRLSYSVDLDPDGRYCFSILDEADEALAIPALVSGA.

The Schiff-base intermediate with substrate; via pyruvic acid role is filled by Ser24. A Pyruvic acid (Ser) modification is found at Ser24. Position 56 (Thr56) interacts with substrate. Catalysis depends on Tyr57, which acts as the Proton donor. Gly72–Ala74 serves as a coordination point for substrate.

The protein belongs to the PanD family. As to quaternary structure, heterooctamer of four alpha and four beta subunits. Pyruvate serves as cofactor. Post-translationally, is synthesized initially as an inactive proenzyme, which is activated by self-cleavage at a specific serine bond to produce a beta-subunit with a hydroxyl group at its C-terminus and an alpha-subunit with a pyruvoyl group at its N-terminus.

The protein resides in the cytoplasm. The catalysed reaction is L-aspartate + H(+) = beta-alanine + CO2. It participates in cofactor biosynthesis; (R)-pantothenate biosynthesis; beta-alanine from L-aspartate: step 1/1. Its function is as follows. Catalyzes the pyruvoyl-dependent decarboxylation of aspartate to produce beta-alanine. The sequence is that of Aspartate 1-decarboxylase 2 from Mesorhizobium japonicum (strain LMG 29417 / CECT 9101 / MAFF 303099) (Mesorhizobium loti (strain MAFF 303099)).